The chain runs to 298 residues: Iron-regulated virulence regulatory protein IrgB (298 aa).

In terms of domain architecture, HTH lysR-type spans 1 to 59 (MQDLSAVKAFHALCQHKSLTAAAKALEQPKSTLSRRLAQLEEDLGQSLLMRQGNRLTLT). The segment at residues 19-38 (LTAAAKALEQPKSTLSRRLA) is a DNA-binding region (H-T-H motif).

The protein belongs to the LysR transcriptional regulatory family.

Its function is as follows. Transcription activation of the irgA gene. In the presence of sufficient iron, transcription of both irgA and irgB is negatively regulated by a fur-like protein. In low iron conditions, negative regulation of transcription is removed, and production of IrgB leads to positive transcriptional activation of irgA. The protein is Iron-regulated virulence regulatory protein IrgB (irgB) of Vibrio cholerae serotype O1 (strain ATCC 39541 / Classical Ogawa 395 / O395).